The sequence spans 339 residues: Dihydroorotate dehydrogenase (quinone) (339 aa).

Residues 62-66 (AGMDK) and Thr86 contribute to the FMN site. Residue Lys66 participates in substrate binding. 111–115 (NRMGF) lines the substrate pocket. Residues Asn139 and Asn172 each contribute to the FMN site. Residue Asn172 participates in substrate binding. Ser175 functions as the Nucleophile in the catalytic mechanism. Position 177 (Asn177) interacts with substrate. The FMN site is built by Lys217 and Thr245. 246–247 (NT) contributes to the substrate binding site. Residues Gly268, Gly297, and 318–319 (YS) each bind FMN.

It belongs to the dihydroorotate dehydrogenase family. Type 2 subfamily. As to quaternary structure, monomer. Requires FMN as cofactor.

Its subcellular location is the cell membrane. It carries out the reaction (S)-dihydroorotate + a quinone = orotate + a quinol. Its pathway is pyrimidine metabolism; UMP biosynthesis via de novo pathway; orotate from (S)-dihydroorotate (quinone route): step 1/1. Catalyzes the conversion of dihydroorotate to orotate with quinone as electron acceptor. The chain is Dihydroorotate dehydrogenase (quinone) from Shewanella putrefaciens (strain CN-32 / ATCC BAA-453).